Consider the following 721-residue polypeptide: Polyribonucleotide nucleotidyltransferase (721 aa).

Mg(2+) contacts are provided by aspartate 495 and aspartate 501. A KH domain is found at 562-621 (PRLLSFRIDPELIGTVIGPGGRTIKGITERTNTKIDIEDSGIVTIASHDGAAADEAQKII). Positions 631 to 699 (GEVFSGAITR…NRGRINLTLR (69 aa)) constitute an S1 motif domain. Positions 700-721 (GVPQNGEEAEPAPAPTPVAPLN) are disordered. Pro residues predominate over residues 711–721 (APAPTPVAPLN).

The protein belongs to the polyribonucleotide nucleotidyltransferase family. Requires Mg(2+) as cofactor.

It localises to the cytoplasm. It carries out the reaction RNA(n+1) + phosphate = RNA(n) + a ribonucleoside 5'-diphosphate. Involved in mRNA degradation. Catalyzes the phosphorolysis of single-stranded polyribonucleotides processively in the 3'- to 5'-direction. This is Polyribonucleotide nucleotidyltransferase from Synechococcus sp. (strain WH7803).